A 354-amino-acid chain; its full sequence is Methionine import ATP-binding protein MetN (354 aa).

An ABC transporter domain is found at 8 to 250 (LDHIDITFRQ…PKEALTQKFI (243 aa)). 42-49 (GYSGAGKS) lines the ATP pocket.

Belongs to the ABC transporter superfamily. Methionine importer (TC 3.A.1.24) family. As to quaternary structure, the complex is composed of two ATP-binding proteins (MetN), two transmembrane proteins (MetI) and a solute-binding protein (MetQ).

It is found in the cell membrane. The enzyme catalyses L-methionine(out) + ATP + H2O = L-methionine(in) + ADP + phosphate + H(+). It catalyses the reaction D-methionine(out) + ATP + H2O = D-methionine(in) + ADP + phosphate + H(+). In terms of biological role, part of the ABC transporter complex MetNIQ involved in methionine import. Responsible for energy coupling to the transport system. The sequence is that of Methionine import ATP-binding protein MetN from Streptococcus pyogenes serotype M18 (strain MGAS8232).